We begin with the raw amino-acid sequence, 361 residues long: Molybdenum import ATP-binding protein ModC (361 aa).

The ABC transporter domain maps to 1 to 228 (MLNINIEKQL…EQMRPWVPLQ (228 aa)). ATP is bound at residue 31 to 38 (GRSGAGKT). The Mop domain occupies 289–356 (GSSVRNLLRG…IKGVTMTQMD (68 aa)).

This sequence belongs to the ABC transporter superfamily. Molybdate importer (TC 3.A.1.8) family. In terms of assembly, the complex is composed of two ATP-binding proteins (ModC), two transmembrane proteins (ModB) and a solute-binding protein (ModA).

It is found in the cell inner membrane. The catalysed reaction is molybdate(out) + ATP + H2O = molybdate(in) + ADP + phosphate + H(+). Its function is as follows. Part of the ABC transporter complex ModABC involved in molybdenum import. Responsible for energy coupling to the transport system. The polypeptide is Molybdenum import ATP-binding protein ModC (Shewanella sp. (strain MR-7)).